Here is a 615-residue protein sequence, read N- to C-terminus: Chaperone protein HscA homolog (615 aa).

This sequence belongs to the heat shock protein 70 family.

Its function is as follows. Chaperone involved in the maturation of iron-sulfur cluster-containing proteins. Has a low intrinsic ATPase activity which is markedly stimulated by HscB. The sequence is that of Chaperone protein HscA homolog from Aeromonas salmonicida (strain A449).